Reading from the N-terminus, the 267-residue chain is Tryptophan synthase alpha chain (267 aa).

Residues E49 and D60 each act as proton acceptor in the active site.

It belongs to the TrpA family. In terms of assembly, tetramer of two alpha and two beta chains.

It carries out the reaction (1S,2R)-1-C-(indol-3-yl)glycerol 3-phosphate + L-serine = D-glyceraldehyde 3-phosphate + L-tryptophan + H2O. Its pathway is amino-acid biosynthesis; L-tryptophan biosynthesis; L-tryptophan from chorismate: step 5/5. In terms of biological role, the alpha subunit is responsible for the aldol cleavage of indoleglycerol phosphate to indole and glyceraldehyde 3-phosphate. The chain is Tryptophan synthase alpha chain from Geobacter sp. (strain M21).